A 276-amino-acid chain; its full sequence is Large ribosomal subunit protein uL2 (276 aa).

2 disordered regions span residues 37 to 59 and 224 to 276; these read QFQK…GGHK and VAMN…RHKR. Basic residues predominate over residues 50 to 59; sequence TTRHKGGGHK.

The protein belongs to the universal ribosomal protein uL2 family. In terms of assembly, part of the 50S ribosomal subunit. Forms a bridge to the 30S subunit in the 70S ribosome.

In terms of biological role, one of the primary rRNA binding proteins. Required for association of the 30S and 50S subunits to form the 70S ribosome, for tRNA binding and peptide bond formation. It has been suggested to have peptidyltransferase activity; this is somewhat controversial. Makes several contacts with the 16S rRNA in the 70S ribosome. This Ralstonia nicotianae (strain ATCC BAA-1114 / GMI1000) (Ralstonia solanacearum) protein is Large ribosomal subunit protein uL2.